We begin with the raw amino-acid sequence, 541 residues long: Glucans biosynthesis protein D (541 aa).

Residues 1 to 29 constitute a signal peptide (tat-type signal); it reads MHRRNLLKASMAIAAYTGLSASGLLAAQA.

The protein belongs to the OpgD/OpgG family. Predicted to be exported by the Tat system. The position of the signal peptide cleavage has not been experimentally proven.

It is found in the periplasm. Its pathway is glycan metabolism; osmoregulated periplasmic glucan (OPG) biosynthesis. Its function is as follows. Probably involved in the control of the structural glucose backbone of osmoregulated periplasmic glucans (OPGs). This Pseudomonas fluorescens (strain SBW25) protein is Glucans biosynthesis protein D.